A 295-amino-acid polypeptide reads, in one-letter code: Glucose-1-phosphate thymidylyltransferase (295 aa).

Residues Asp111 and Asp226 each contribute to the Mg(2+) site.

Belongs to the glucose-1-phosphate thymidylyltransferase family. In terms of assembly, homotetramer. The cofactor is Mg(2+).

The catalysed reaction is dTTP + alpha-D-glucose 1-phosphate + H(+) = dTDP-alpha-D-glucose + diphosphate. It participates in carbohydrate biosynthesis; dTDP-L-rhamnose biosynthesis. The protein operates within bacterial outer membrane biogenesis; LPS O-antigen biosynthesis. Functionally, catalyzes the formation of dTDP-glucose, from dTTP and glucose 1-phosphate, as well as its pyrophosphorolysis. In Xanthomonas campestris pv. campestris (strain B100), this protein is Glucose-1-phosphate thymidylyltransferase (rmlA).